A 353-amino-acid polypeptide reads, in one-letter code: MKKIIIMAGGTCGHIFPGLEIAKSLINKGWKVFWLGTSKNIESKIVPKYGITIKYINISGVRGKNLFELMAIPFKLIIACYQAKKIIENINPDIILGMGGYVSVPGGIISYLYKKPLIIHEQNKIAGLANKLLSKFTTINMQAFANTILTSKSITVGNPLRTSITNLKKSWDRFENRSGPLRILVVGGSQGTQIFNFCFPKVALVLKNKIKLWHQIGKKNINIIHKLYDIHNNLAIYKITPFIKNISKAYFWADLIICRAGALTVSEIQYIGLPAIFVPFPHKDQHQYWNAYPLKMIGGAKIIMQERFNVNVIITLLKNLNRQKLIVMAKKLRSSYKLNSIKTITKIIENITH.

Residues asparagine 123, arginine 161, serine 189, isoleucine 243, 262–267 (ALTVSE), and glutamine 287 contribute to the UDP-N-acetyl-alpha-D-glucosamine site.

It belongs to the glycosyltransferase 28 family. MurG subfamily.

It is found in the cell membrane. The enzyme catalyses di-trans,octa-cis-undecaprenyl diphospho-N-acetyl-alpha-D-muramoyl-L-alanyl-D-glutamyl-meso-2,6-diaminopimeloyl-D-alanyl-D-alanine + UDP-N-acetyl-alpha-D-glucosamine = di-trans,octa-cis-undecaprenyl diphospho-[N-acetyl-alpha-D-glucosaminyl-(1-&gt;4)]-N-acetyl-alpha-D-muramoyl-L-alanyl-D-glutamyl-meso-2,6-diaminopimeloyl-D-alanyl-D-alanine + UDP + H(+). It participates in cell wall biogenesis; peptidoglycan biosynthesis. Its function is as follows. Cell wall formation. Catalyzes the transfer of a GlcNAc subunit on undecaprenyl-pyrophosphoryl-MurNAc-pentapeptide (lipid intermediate I) to form undecaprenyl-pyrophosphoryl-MurNAc-(pentapeptide)GlcNAc (lipid intermediate II). The protein is UDP-N-acetylglucosamine--N-acetylmuramyl-(pentapeptide) pyrophosphoryl-undecaprenol N-acetylglucosamine transferase of Buchnera aphidicola subsp. Baizongia pistaciae (strain Bp).